The sequence spans 204 residues: Large ribosomal subunit protein eL15B (204 aa).

Residues 165–185 form a disordered region; sequence TATGKKSRGINKGHKFNNTKA. The span at 169–185 shows a compositional bias: basic residues; the sequence is KKSRGINKGHKFNNTKA.

It belongs to the eukaryotic ribosomal protein eL15 family. As to quaternary structure, component of the large ribosomal subunit (LSU). Mature yeast ribosomes consist of a small (40S) and a large (60S) subunit. The 40S small subunit contains 1 molecule of ribosomal RNA (18S rRNA) and 33 different proteins (encoded by 57 genes). The large 60S subunit contains 3 rRNA molecules (25S, 5.8S and 5S rRNA) and 46 different proteins (encoded by 81 genes).

The protein localises to the cytoplasm. Functionally, component of the ribosome, a large ribonucleoprotein complex responsible for the synthesis of proteins in the cell. The small ribosomal subunit (SSU) binds messenger RNAs (mRNAs) and translates the encoded message by selecting cognate aminoacyl-transfer RNA (tRNA) molecules. The large subunit (LSU) contains the ribosomal catalytic site termed the peptidyl transferase center (PTC), which catalyzes the formation of peptide bonds, thereby polymerizing the amino acids delivered by tRNAs into a polypeptide chain. The nascent polypeptides leave the ribosome through a tunnel in the LSU and interact with protein factors that function in enzymatic processing, targeting, and the membrane insertion of nascent chains at the exit of the ribosomal tunnel. This is Large ribosomal subunit protein eL15B from Saccharomyces cerevisiae (strain ATCC 204508 / S288c) (Baker's yeast).